The chain runs to 750 residues: Sulfhydryl oxidase 1 (750 aa).

Residues 1-32 (MRRCGRHSGPPSLLLLLLLLPPLLLSVPGAYA) form the signal peptide. The Thioredoxin domain occupies 33 to 159 (ARLSVLYSSS…RMRLIDALES (127 aa)). Residues C73 and C76 each act as nucleophile in the active site. 2 disulfides stabilise this stretch: C73–C76 and C104–C113. N-linked (GlcNAc...) asparagine glycans are attached at residues N133 and N246. C396 and C408 are disulfide-bonded. Residues 399 to 506 (SEPHFRGFPC…EDPQFPKVQW (108 aa)) enclose the ERV/ALR sulfhydryl oxidase domain. FAD-binding positions include R404, W411, H415, D454, H458, 481–488 (WTSHNRVN), K503, and W506. C452 and C455 form a disulfide bridge. The cysteines at positions 512 and 515 are disulfide-linked. Disordered regions lie at residues 545 to 567 (VRDPPAPGPASRRGTQDPEASPN) and 585 to 632 (EQAA…PEHT). Over residues 587 to 597 (AASAASPGATA) the composition is skewed to low complexity. Residues 710–730 (FLDISLCVGLYSVSFMGLLAM) form a helical membrane-spanning segment.

This sequence belongs to the quiescin-sulfhydryl oxidase (QSOX) family. As to quaternary structure, monomer. The cofactor is FAD. N-glycosylated. O-glycosylated on Thr and Ser residues. Isoform 3: Detected in seminal vesicle fluid (at protein level). Isoform 1: Detected in brain, hypophysis, heart, testis and the seminal vesicle. Isoform 3: Highly expressed in the seminal vesicles followed by testis, heart, brain, thymus, hypophysis and lung. Also expressed in prostate, kidney, spleen, liver.

Its subcellular location is the golgi apparatus membrane. The protein resides in the secreted. The enzyme catalyses 2 R'C(R)SH + O2 = R'C(R)S-S(R)CR' + H2O2. Its function is as follows. Catalyzes the oxidation of sulfhydryl groups in peptide and protein thiols to disulfides with the reduction of oxygen to hydrogen peroxide. Plays a role in disulfide bond formation in a variety of extracellular proteins. In fibroblasts, required for normal incorporation of laminin into the extracellular matrix, and thereby for normal cell-cell adhesion and cell migration. This chain is Sulfhydryl oxidase 1 (Qsox1), found in Rattus norvegicus (Rat).